The following is a 102-amino-acid chain: RNA-binding protein Hfq (102 aa).

Residues 9–68 enclose the Sm domain; that stretch reads DPFLNALRRERVPVSIYLVNGIKLQGQIESFDQFVILLKNTVSQMVYKHAISTVVPSRPV. A disordered region spans residues 63–102; that stretch reads VPSRPVSHHSNNAGGSTSSNYHHGSSAQNTSAQQDSEENE. Over residues 70–96 the composition is skewed to polar residues; the sequence is HHSNNAGGSTSSNYHHGSSAQNTSAQQ.

This sequence belongs to the Hfq family. In terms of assembly, homohexamer.

In terms of biological role, RNA chaperone that binds small regulatory RNA (sRNAs) and mRNAs to facilitate mRNA translational regulation in response to envelope stress, environmental stress and changes in metabolite concentrations. Also binds with high specificity to tRNAs. The protein is RNA-binding protein Hfq of Escherichia coli O17:K52:H18 (strain UMN026 / ExPEC).